The sequence spans 311 residues: Bifunctional protein FolD (311 aa).

Residues 180 to 182 (GRS), serine 209, and isoleucine 250 each bind NADP(+).

This sequence belongs to the tetrahydrofolate dehydrogenase/cyclohydrolase family. In terms of assembly, homodimer.

The catalysed reaction is (6R)-5,10-methylene-5,6,7,8-tetrahydrofolate + NADP(+) = (6R)-5,10-methenyltetrahydrofolate + NADPH. It catalyses the reaction (6R)-5,10-methenyltetrahydrofolate + H2O = (6R)-10-formyltetrahydrofolate + H(+). It functions in the pathway one-carbon metabolism; tetrahydrofolate interconversion. In terms of biological role, catalyzes the oxidation of 5,10-methylenetetrahydrofolate to 5,10-methenyltetrahydrofolate and then the hydrolysis of 5,10-methenyltetrahydrofolate to 10-formyltetrahydrofolate. In Haloquadratum walsbyi (strain DSM 16790 / HBSQ001), this protein is Bifunctional protein FolD.